The following is a 157-amino-acid chain: MRVGIGIDVHQFVENRKLIIGGIEIPHTMGLKGHSDADVLLHAISDALLGAAALGDIGKHFPDTSPDFKDIDSRILLRHVGKLIADEGYTIVNIDSMLLMERPKVAPYIVAMRESIAECLDIETSRVSVKATTNEKLGYIGRQEGAAAHAVCLIEEK.

A divalent metal cation is bound by residues D8 and H10. Residues 8–10 and 34–35 contribute to the 4-CDP-2-C-methyl-D-erythritol 2-phosphate site; these read DVH and HS. H42 is an a divalent metal cation binding site. 4-CDP-2-C-methyl-D-erythritol 2-phosphate contacts are provided by residues 56 to 58, 132 to 135, and R142; these read DIG and TTNE.

This sequence belongs to the IspF family. As to quaternary structure, homotrimer. A divalent metal cation is required as a cofactor.

The catalysed reaction is 4-CDP-2-C-methyl-D-erythritol 2-phosphate = 2-C-methyl-D-erythritol 2,4-cyclic diphosphate + CMP. The protein operates within isoprenoid biosynthesis; isopentenyl diphosphate biosynthesis via DXP pathway; isopentenyl diphosphate from 1-deoxy-D-xylulose 5-phosphate: step 4/6. Involved in the biosynthesis of isopentenyl diphosphate (IPP) and dimethylallyl diphosphate (DMAPP), two major building blocks of isoprenoid compounds. Catalyzes the conversion of 4-diphosphocytidyl-2-C-methyl-D-erythritol 2-phosphate (CDP-ME2P) to 2-C-methyl-D-erythritol 2,4-cyclodiphosphate (ME-CPP) with a corresponding release of cytidine 5-monophosphate (CMP). The sequence is that of 2-C-methyl-D-erythritol 2,4-cyclodiphosphate synthase from Prosthecochloris aestuarii (strain DSM 271 / SK 413).